Consider the following 86-residue polypeptide: uncharacterized protein (86 aa).

This is an uncharacterized protein from Sus scrofa (Pig).